Here is a 99-residue protein sequence, read N- to C-terminus: Ragulator complex protein LAMTOR4 (99 aa).

Methionine 1 carries the N-acetylmethionine modification. Threonine 2 carries the post-translational modification N-acetylthreonine; in Ragulator complex protein LAMTOR4, N-terminally processed. Serine 67 is subject to Phosphoserine; by PKA.

Belongs to the LAMTOR4 family. Part of the Ragulator complex composed of LAMTOR1, LAMTOR2, LAMTOR3, LAMTOR4 and LAMTOR5. LAMTOR4 and LAMTOR5 form a heterodimer that interacts, through LAMTOR1, with a LAMTOR2, LAMTOR3 heterodimer. The Ragulator complex interacts with both the mTORC1 complex and heterodimers constituted of the Rag GTPases RagA/RRAGA, RagB/RRAGB, RagC/RRAGC and RagD/RRAGD; regulated by amino acid availability. The Ragulator complex interacts with SLC38A9; the probable amino acid sensor. Component of the lysosomal folliculin complex (LFC), composed of FLCN, FNIP1 (or FNIP2), RagA/RRAGA or RagB/RRAGB GDP-bound, RagC/RRAGC or RagD/RRAGD GTP-bound, and Ragulator. Post-translationally, phosphorylation at Ser-67 by PKA inhibits Ragulator complex assembly.

The protein resides in the lysosome. Its function is as follows. As part of the Ragulator complex it is involved in amino acid sensing and activation of mTORC1, a signaling complex promoting cell growth in response to growth factors, energy levels, and amino acids. Activated by amino acids through a mechanism involving the lysosomal V-ATPase, the Ragulator plays a dual role for the small GTPases Rag (RagA/RRAGA, RagB/RRAGB, RagC/RRAGC and/or RagD/RRAGD): it (1) acts as a guanine nucleotide exchange factor (GEF), activating the small GTPases Rag and (2) mediates recruitment of Rag GTPases to the lysosome membrane. Activated Ragulator and Rag GTPases function as a scaffold recruiting mTORC1 to lysosomes where it is in turn activated. In Homo sapiens (Human), this protein is Ragulator complex protein LAMTOR4.